The primary structure comprises 455 residues: La-related protein 6C (455 aa).

A compositionally biased stretch (basic and acidic residues) spans 1-20 (MAQMQREEVESVTTEKKRLD). The disordered stretch occupies residues 1 to 29 (MAQMQREEVESVTTEKKRLDGGGGSSGAQ). One can recognise an HTH La-type RNA-binding domain in the interval 138-229 (NLLSDDLRLK…KRTSQFTDRD (92 aa)). The region spanning 236 to 324 (RTVVAENLPD…KGLRVRLLLR (89 aa)) is the RRM domain. Disordered stretches follow at residues 348–396 (SYES…YAVG) and 414–455 (SLGS…PNNL).

It localises to the nucleus. Functionally, transcriptional regulator. This is La-related protein 6C (LARP6C) from Arabidopsis thaliana (Mouse-ear cress).